The primary structure comprises 122 residues: Large ribosomal subunit protein uL14 (122 aa).

The protein belongs to the universal ribosomal protein uL14 family. In terms of assembly, part of the 50S ribosomal subunit. Forms a cluster with proteins L3 and L19. In the 70S ribosome, L14 and L19 interact and together make contacts with the 16S rRNA in bridges B5 and B8.

In terms of biological role, binds to 23S rRNA. Forms part of two intersubunit bridges in the 70S ribosome. This chain is Large ribosomal subunit protein uL14, found in Listeria monocytogenes serotype 4b (strain CLIP80459).